The chain runs to 243 residues: UPF0502 protein H16_B1091 (243 aa).

The segment at 1–23 (MQSNHDSDASQAGDRPARPALRP) is disordered.

It belongs to the UPF0502 family.

This Cupriavidus necator (strain ATCC 17699 / DSM 428 / KCTC 22496 / NCIMB 10442 / H16 / Stanier 337) (Ralstonia eutropha) protein is UPF0502 protein H16_B1091.